The sequence spans 89 residues: Cytochrome c6 (89 aa).

Heme c contacts are provided by C15, C18, H19, and M61.

Belongs to the cytochrome c family. PetJ subfamily. As to quaternary structure, monomer. Post-translationally, binds 1 heme c group covalently per subunit.

Its subcellular location is the plastid. The protein resides in the chloroplast thylakoid lumen. In terms of biological role, functions as an electron carrier between membrane-bound cytochrome b6-f and photosystem I in oxygenic photosynthesis. In Tetradesmus obliquus (Green alga), this protein is Cytochrome c6 (petJ).